The primary structure comprises 342 residues: 3-isopropylmalate dehydrogenase (342 aa).

4 residues coordinate substrate: Arg92, Arg102, Arg126, and Asp216. Mg(2+) contacts are provided by Asp216, Asp240, and Asp244. 276–288 (GSAPDIAGKGIAD) serves as a coordination point for NAD(+).

The protein belongs to the isocitrate and isopropylmalate dehydrogenases family. LeuB type 2 subfamily. Homodimer. Requires Mg(2+) as cofactor. Mn(2+) is required as a cofactor.

The protein resides in the cytoplasm. The enzyme catalyses (2R,3S)-3-isopropylmalate + NAD(+) = 4-methyl-2-oxopentanoate + CO2 + NADH. It functions in the pathway amino-acid biosynthesis; L-leucine biosynthesis; L-leucine from 3-methyl-2-oxobutanoate: step 3/4. Catalyzes the oxidation of 3-carboxy-2-hydroxy-4-methylpentanoate (3-isopropylmalate) to 3-carboxy-4-methyl-2-oxopentanoate. The product decarboxylates to 4-methyl-2 oxopentanoate. The protein is 3-isopropylmalate dehydrogenase of Corynebacterium kroppenstedtii (strain DSM 44385 / JCM 11950 / CIP 105744 / CCUG 35717).